The primary structure comprises 66 residues: Large ribosomal subunit protein uL29 (66 aa).

The protein belongs to the universal ribosomal protein uL29 family.

The sequence is that of Large ribosomal subunit protein uL29 from Petrotoga mobilis (strain DSM 10674 / SJ95).